The following is a 769-amino-acid chain: DNA gyrase subunit B (769 aa).

In terms of domain architecture, Toprim spans 414–528 (SEIYLVEGDS…NGHIYLAQPP (115 aa)). 3 residues coordinate Mg(2+): glutamate 420, aspartate 493, and aspartate 495.

Belongs to the type II topoisomerase GyrB family. As to quaternary structure, heterotetramer, composed of two GyrA and two GyrB chains. In the heterotetramer, GyrA contains the active site tyrosine that forms a transient covalent intermediate with DNA, while GyrB binds cofactors and catalyzes ATP hydrolysis. Mg(2+) is required as a cofactor. Mn(2+) serves as cofactor. The cofactor is Ca(2+).

The protein localises to the cytoplasm. It carries out the reaction ATP-dependent breakage, passage and rejoining of double-stranded DNA.. Its function is as follows. A type II topoisomerase that negatively supercoils closed circular double-stranded (ds) DNA in an ATP-dependent manner to modulate DNA topology and maintain chromosomes in an underwound state. Negative supercoiling favors strand separation, and DNA replication, transcription, recombination and repair, all of which involve strand separation. Also able to catalyze the interconversion of other topological isomers of dsDNA rings, including catenanes and knotted rings. Type II topoisomerases break and join 2 DNA strands simultaneously in an ATP-dependent manner. This Campylobacter jejuni subsp. jejuni serotype O:2 (strain ATCC 700819 / NCTC 11168) protein is DNA gyrase subunit B.